The primary structure comprises 297 residues: Transmembrane protein 178A (297 aa).

Positions 1–25 are cleaved as a signal peptide; that stretch reads MEPRALVTALSLGLSLCSLGLLVTA. The Extracellular portion of the chain corresponds to 26–179; it reads IFTDHWYETD…LLHLRRITAG (154 aa). Over residues 41-57 the composition is skewed to basic and acidic residues; the sequence is ESCERSRAGADPPDQKN. A disordered region spans residues 41–86; the sequence is ESCERSRAGADPPDQKNRLMPLSHLPLRDSPPLGRRLLPGGPGRSD. Positions 68-79 are enriched in low complexity; that stretch reads RDSPPLGRRLLP. An N-linked (GlcNAc...) asparagine glycan is attached at asparagine 158. The chain crosses the membrane as a helical span at residues 180 to 200; it reads FLGMAVAVLLCGCIVATVSFF. Topologically, residues 201–208 are cytoplasmic; the sequence is WEESLTQH. The chain crosses the membrane as a helical span at residues 209–229; sequence VAGLLFLMTGIFCTISLCTYA. Residues 230 to 257 lie on the Extracellular side of the membrane; that stretch reads ASVSYDLNRVPKLIYSLPHDVEHGYSWS. A helical membrane pass occupies residues 258–278; the sequence is IFCAWCSLGFIVAAGGLCIAY. Residues 279-297 are Cytoplasmic-facing; sequence PFISRTKIAHLKSGRDSTV.

It belongs to the TMEM178 family. Interacts with STIM1. As to expression, highly expressed in the bone and its expression increases during osteoclastogenesis.

Its subcellular location is the endoplasmic reticulum membrane. Its function is as follows. Acts as a negative regulator of osteoclast differentiation in basal and inflammatory conditions by regulating TNFSF11-induced Ca (2+) fluxes, thereby controlling the induction of NFATC1. The polypeptide is Transmembrane protein 178A (Tmem178a) (Mus musculus (Mouse)).